The primary structure comprises 398 residues: Dual-specificity RNA methyltransferase RlmN (398 aa).

The active-site Proton acceptor is the glutamate 100. The Radical SAM core domain occupies 106–345 (DGDRGTLCVS…TTVRTTRGDD (240 aa)). Cysteines 113 and 350 form a disulfide. Positions 120, 124, and 127 each coordinate [4Fe-4S] cluster. S-adenosyl-L-methionine contacts are provided by residues 174-175 (GE), serine 206, 228-230 (SLH), and asparagine 307. Cysteine 350 (S-methylcysteine intermediate) is an active-site residue.

The protein belongs to the radical SAM superfamily. RlmN family. [4Fe-4S] cluster serves as cofactor.

The protein resides in the cytoplasm. It carries out the reaction adenosine(2503) in 23S rRNA + 2 reduced [2Fe-2S]-[ferredoxin] + 2 S-adenosyl-L-methionine = 2-methyladenosine(2503) in 23S rRNA + 5'-deoxyadenosine + L-methionine + 2 oxidized [2Fe-2S]-[ferredoxin] + S-adenosyl-L-homocysteine. It catalyses the reaction adenosine(37) in tRNA + 2 reduced [2Fe-2S]-[ferredoxin] + 2 S-adenosyl-L-methionine = 2-methyladenosine(37) in tRNA + 5'-deoxyadenosine + L-methionine + 2 oxidized [2Fe-2S]-[ferredoxin] + S-adenosyl-L-homocysteine. Its function is as follows. Specifically methylates position 2 of adenine 2503 in 23S rRNA and position 2 of adenine 37 in tRNAs. m2A2503 modification seems to play a crucial role in the proofreading step occurring at the peptidyl transferase center and thus would serve to optimize ribosomal fidelity. This chain is Dual-specificity RNA methyltransferase RlmN, found in Saccharophagus degradans (strain 2-40 / ATCC 43961 / DSM 17024).